We begin with the raw amino-acid sequence, 435 residues long: Serine carboxypeptidase-like 16 (435 aa).

A signal peptide spans 1 to 23; sequence MGSWIPKLLLLQLVLLLTKHADS. 3 disulfide bridges follow: C82–C325, C246–C260, and C284–C291. N103 carries an N-linked (GlcNAc...) asparagine glycan. S178 is a catalytic residue. N305 carries N-linked (GlcNAc...) asparagine glycosylation. D360 is an active-site residue. N376 is a glycosylation site (N-linked (GlcNAc...) asparagine). H413 is a catalytic residue.

It belongs to the peptidase S10 family. In terms of tissue distribution, expressed in seedlings, roots and leaves.

The protein resides in the secreted. Its function is as follows. Probable carboxypeptidase. This is Serine carboxypeptidase-like 16 (SCPL16) from Arabidopsis thaliana (Mouse-ear cress).